We begin with the raw amino-acid sequence, 329 residues long: Biotin synthase (329 aa).

One can recognise a Radical SAM core domain in the interval 38–262 (NTIQVSTLLS…IMPHSYIRLS (225 aa)). The [4Fe-4S] cluster site is built by Cys53, Cys57, and Cys60. [2Fe-2S] cluster contacts are provided by Cys97, Cys128, Cys188, and Arg260.

This sequence belongs to the radical SAM superfamily. Biotin synthase family. In terms of assembly, homodimer. It depends on [4Fe-4S] cluster as a cofactor. [2Fe-2S] cluster is required as a cofactor.

It carries out the reaction (4R,5S)-dethiobiotin + (sulfur carrier)-SH + 2 reduced [2Fe-2S]-[ferredoxin] + 2 S-adenosyl-L-methionine = (sulfur carrier)-H + biotin + 2 5'-deoxyadenosine + 2 L-methionine + 2 oxidized [2Fe-2S]-[ferredoxin]. It functions in the pathway cofactor biosynthesis; biotin biosynthesis; biotin from 7,8-diaminononanoate: step 2/2. In terms of biological role, catalyzes the conversion of dethiobiotin (DTB) to biotin by the insertion of a sulfur atom into dethiobiotin via a radical-based mechanism. This chain is Biotin synthase, found in Acinetobacter baumannii (strain SDF).